Here is a 310-residue protein sequence, read N- to C-terminus: ADP-L-glycero-D-manno-heptose-6-epimerase (310 aa).

Residues 10–11, 31–32, K38, K53, 75–79, and N92 contribute to the NADP(+) site; these read FI, DN, and EGACS. Catalysis depends on Y140, which acts as the Proton acceptor. An NADP(+)-binding site is contributed by K144. Residue N169 coordinates substrate. Residues V170 and K178 each coordinate NADP(+). The active-site Proton acceptor is the K178. Substrate-binding positions include S180, H187, 201–204, and R209; that span reads FEGS. Residue K267 is modified to N6-acetyllysine. Y272 serves as a coordination point for substrate.

This sequence belongs to the NAD(P)-dependent epimerase/dehydratase family. HldD subfamily. Homopentamer. NADP(+) serves as cofactor.

It catalyses the reaction ADP-D-glycero-beta-D-manno-heptose = ADP-L-glycero-beta-D-manno-heptose. It participates in nucleotide-sugar biosynthesis; ADP-L-glycero-beta-D-manno-heptose biosynthesis; ADP-L-glycero-beta-D-manno-heptose from D-glycero-beta-D-manno-heptose 7-phosphate: step 4/4. Catalyzes the interconversion between ADP-D-glycero-beta-D-manno-heptose and ADP-L-glycero-beta-D-manno-heptose via an epimerization at carbon 6 of the heptose. The polypeptide is ADP-L-glycero-D-manno-heptose-6-epimerase (Shigella boydii serotype 18 (strain CDC 3083-94 / BS512)).